The chain runs to 135 residues: Large ribosomal subunit protein bL17 (135 aa).

It belongs to the bacterial ribosomal protein bL17 family. In terms of assembly, part of the 50S ribosomal subunit. Contacts protein L32.

The sequence is that of Large ribosomal subunit protein bL17 from Rhodopseudomonas palustris (strain BisB18).